The chain runs to 298 residues: Hydroxymethylglutaryl-CoA lyase, mitochondrial (298 aa).

In terms of domain architecture, Pyruvate carboxyltransferase spans 6 to 273 (VKVVEVGPRD…HTGVDLQKLM (268 aa)). Substrate is bound at residue R14. An a divalent metal cation-binding site is contributed by D15. N6-acetyllysine is present on K21. Positions 206 and 208 each coordinate a divalent metal cation. The active site involves C239. An a divalent metal cation-binding site is contributed by N248. A Microbody targeting signal motif is present at residues 296–298 (CRL).

It belongs to the HMG-CoA lyase family. Homodimer; disulfide-linked. Can also form homotetramers.

It is found in the mitochondrion matrix. It localises to the peroxisome. It catalyses the reaction (3S)-3-hydroxy-3-methylglutaryl-CoA = acetoacetate + acetyl-CoA. The protein operates within metabolic intermediate metabolism; (S)-3-hydroxy-3-methylglutaryl-CoA degradation; acetoacetate from (S)-3-hydroxy-3-methylglutaryl-CoA: step 1/1. Mitochondrial 3-hydroxy-3-methylglutaryl-CoA lyase that catalyzes a cation-dependent cleavage of (S)-3-hydroxy-3-methylglutaryl-CoA into acetyl-CoA and acetoacetate, a key step in ketogenesis. Terminal step in leucine catabolism. Ketone bodies (beta-hydroxybutyrate, acetoacetate and acetone) are essential as an alternative source of energy to glucose, as lipid precursors and as regulators of metabolism. This Gallus gallus (Chicken) protein is Hydroxymethylglutaryl-CoA lyase, mitochondrial (HMGCL).